The sequence spans 223 residues: Putative 3-methyladenine DNA glycosylase (223 aa).

It belongs to the DNA glycosylase MPG family.

The chain is Putative 3-methyladenine DNA glycosylase from Rhodococcus jostii (strain RHA1).